The primary structure comprises 323 residues: Aldo-keto reductase family 1 member C4 (323 aa).

Residues 20–24 and Asp50 each bind NADP(+); that span reads GFGTY. Tyr55 functions as the Proton donor in the catalytic mechanism. Residue His117 coordinates substrate. NADP(+)-binding positions include 166-167, Gln190, 216-221, and 270-280; these read SN, HSALGT, and KSYNEQRIREN.

Belongs to the aldo/keto reductase family. In terms of assembly, monomer. Post-translationally, the N-terminus is blocked. In terms of tissue distribution, liver specific.

Its subcellular location is the cytoplasm. It localises to the cytosol. It carries out the reaction a 3alpha-hydroxysteroid + NADP(+) = a 3-oxosteroid + NADPH + H(+). It catalyses the reaction a 3alpha-hydroxysteroid + NAD(+) = a 3-oxosteroid + NADH + H(+). The enzyme catalyses 5alpha-androstane-3alpha,17beta-diol + NADP(+) = 17beta-hydroxy-5alpha-androstan-3-one + NADPH + H(+). The catalysed reaction is 5alpha-androstane-3beta,17beta-diol + NADP(+) = 17beta-hydroxy-5alpha-androstan-3-one + NADPH + H(+). It carries out the reaction 5alpha-androstane-3alpha,17beta-diol + NAD(+) = 17beta-hydroxy-5alpha-androstan-3-one + NADH + H(+). It catalyses the reaction 17beta-estradiol + NADP(+) = estrone + NADPH + H(+). The enzyme catalyses 17beta-estradiol + NAD(+) = estrone + NADH + H(+). The catalysed reaction is (20S)-hydroxypregn-4-en-3-one + NADP(+) = progesterone + NADPH + H(+). It carries out the reaction (20S)-hydroxypregn-4-en-3-one + NAD(+) = progesterone + NADH + H(+). It catalyses the reaction androsterone + NADP(+) = 5alpha-androstan-3,17-dione + NADPH + H(+). The enzyme catalyses testosterone + NADP(+) = androst-4-ene-3,17-dione + NADPH + H(+). The catalysed reaction is testosterone + NAD(+) = androst-4-ene-3,17-dione + NADH + H(+). It carries out the reaction 3alpha-hydroxy-5alpha-androstane 17-O-(beta-D-glucuronate) + NADP(+) = 5alpha-dihydrotestosterone 17-O-(beta-D-glucuronate) + NADPH + H(+). It catalyses the reaction (3beta,5alpha,17beta)-3-hydroxy-androstan-17-yl sulfate + NADP(+) = 5alpha-dihydrotestosterone sulfate + NADPH + H(+). The enzyme catalyses 5alpha-androstane-3alpha,17beta-diol + NAD(+) = androsterone + NADH + H(+). The catalysed reaction is chlordecone alcohol + NADP(+) = chlordecone + NADPH + H(+). It participates in steroid metabolism. Inhibited by nonsteroidal the anti-inflammatory drugs (NSAID) flufenamic. The oxidation reaction is inhibited by low micromolar concentrations of NADPH. Functionally, cytosolic aldo-keto reductase that catalyzes the NADH and NADPH-dependent reduction of ketosteroids to hydroxysteroids. Liver specific enzyme that acts as an NAD(P)(H)-dependent 3-, 17- and 20-ketosteroid reductase on the steroid nucleus and side chain. Displays the ability to catalyze both oxidation and reduction in vitro, but most probably acts as a reductase in vivo since the oxidase activity measured in vitro is inhibited by physiological concentration of NADPH. Acts preferentially as a 3-alpha-hydroxysteroid dehydrogenase (HSD) with a subsidiary 3-beta-HSD activity. Catalyzes efficiently the transformation of the potent androgen 5-alpha-dihydrotestosterone (5alpha-DHT or 17beta-hydroxy-5alpha-androstan-3-one) into the less active form, 5-alpha-androstan-3-alpha,17-beta-diol (3-alpha-diol). Catalyzes the reduction of estrone into 17beta-estradiol but with low efficiency. Metabolizes a broad spectrum of natural and synthetic therapeutic steroid and plays an important role in metabolism of androgens, estrogens, progestereone and conjugated steroids. Catalyzes the biotransformation of the pesticide chlordecone (kepone) to its corresponding alcohol leading to increased biliary excretion of the pesticide and concomitant reduction of its neurotoxicity since bile is the major excretory route. The polypeptide is Aldo-keto reductase family 1 member C4 (AKR1C4) (Homo sapiens (Human)).